We begin with the raw amino-acid sequence, 333 residues long: Fructose-1,6-bisphosphatase class 1 (333 aa).

4 residues coordinate Mg(2+): Glu89, Asp112, Leu114, and Asp115. Substrate-binding positions include 115-118 (DGSS), Asn208, Tyr241, and Lys271. Glu277 contacts Mg(2+).

It belongs to the FBPase class 1 family. In terms of assembly, homotetramer. Mg(2+) serves as cofactor.

Its subcellular location is the cytoplasm. It catalyses the reaction beta-D-fructose 1,6-bisphosphate + H2O = beta-D-fructose 6-phosphate + phosphate. It functions in the pathway carbohydrate biosynthesis; gluconeogenesis. The polypeptide is Fructose-1,6-bisphosphatase class 1 (Haemophilus influenzae (strain ATCC 51907 / DSM 11121 / KW20 / Rd)).